Reading from the N-terminus, the 720-residue chain is Catalase-peroxidase (720 aa).

The segment at residues 94 to 222 (WHAAGTYRIA…LAAVTMGLIY (129 aa)) is a cross-link (tryptophyl-tyrosyl-methioninium (Trp-Tyr) (with M-248)). Catalysis depends on His-95, which acts as the Proton acceptor. Residues 222–248 (YVNPEGVDGNPDPLKTAHDVRVTFARM) constitute a cross-link (tryptophyl-tyrosyl-methioninium (Tyr-Met) (with W-94)). His-263 contributes to the heme b binding site.

It belongs to the peroxidase family. Peroxidase/catalase subfamily. Homodimer. The cofactor is heme b. In terms of processing, formation of the three residue Trp-Tyr-Met cross-link is important for the catalase, but not the peroxidase activity of the enzyme.

It catalyses the reaction H2O2 + AH2 = A + 2 H2O. It carries out the reaction 2 H2O2 = O2 + 2 H2O. Its function is as follows. Bifunctional enzyme with both catalase and broad-spectrum peroxidase activity. The sequence is that of Catalase-peroxidase from Synechococcus elongatus (strain ATCC 33912 / PCC 7942 / FACHB-805) (Anacystis nidulans R2).